The chain runs to 817 residues: TPR repeat-containing protein C19B12.01 (817 aa).

Disordered regions lie at residues Asp276–Pro298 and Gly386–Asn413. 4 TPR repeats span residues Leu459–Asp492, Ala521–Ser554, Tyr555–Asp588, and Trp625–Asp658.

The polypeptide is TPR repeat-containing protein C19B12.01 (Schizosaccharomyces pombe (strain 972 / ATCC 24843) (Fission yeast)).